The chain runs to 233 residues: Lipoprotein-releasing system ATP-binding protein LolD (233 aa).

One can recognise an ABC transporter domain in the interval 9–233 (LAINAVSKVF…GILSQSETHR (225 aa)). ATP is bound at residue 45 to 52 (GSSGSGKS).

The protein belongs to the ABC transporter superfamily. Lipoprotein translocase (TC 3.A.1.125) family. As to quaternary structure, the complex is composed of two ATP-binding proteins (LolD) and two transmembrane proteins (LolC and LolE).

It is found in the cell inner membrane. Part of the ABC transporter complex LolCDE involved in the translocation of mature outer membrane-directed lipoproteins, from the inner membrane to the periplasmic chaperone, LolA. Responsible for the formation of the LolA-lipoprotein complex in an ATP-dependent manner. The chain is Lipoprotein-releasing system ATP-binding protein LolD from Shewanella denitrificans (strain OS217 / ATCC BAA-1090 / DSM 15013).